A 283-amino-acid chain; its full sequence is MKCYFTDHRGEQSPTDGTTLSLTSPESTEESVEVFWPGTIQREGSSPRPGPAIPREEGLYFAARDRGMRDWSSSPSSESSEYQSYSQYQSCCSCMCDEDNAAPQSVCAFYTHVQTVRGVAVAWETEAGFEPVTRKPRIHEAQFIKRQRWNGSSFEMASNTDMRWDLEACKSNCSPEPEDIDLLECCLQELREPPDWLVTTNYGVRCVACCRVLPSLDALLEHAQHGIREGFSCQIFFEEMLERRRAQGQAHDQQLEEEQSPSDNSECSRPQGEVLSAQQQEKQ.

The segment covering 1–11 (MKCYFTDHRGE) has biased composition (basic and acidic residues). Disordered regions lie at residues 1 to 58 (MKCY…REEG) and 246 to 283 (AQGQAHDQQLEEEQSPSDNSECSRPQGEVLSAQQQEKQ).

Belongs to the FAM170 family. As to quaternary structure, interacts with GOPC. Exclusively expressed in adult testis.

It is found in the cytoplasmic vesicle. The protein localises to the secretory vesicle. The protein resides in the acrosome. It localises to the acrosome outer membrane. Plays a role in fertilization through the acrosome reaction. This Homo sapiens (Human) protein is Protein FAM170B.